A 411-amino-acid polypeptide reads, in one-letter code: Formate-dependent phosphoribosylglycinamide formyltransferase (411 aa).

Position 25 to 26 (25 to 26 (EL)) interacts with N(1)-(5-phospho-beta-D-ribosyl)glycinamide. ATP-binding positions include R118, K159, 164-169 (SSGAGQ), 199-202 (EQYI), and E207. Residues 123-318 (TFAHDKLGLP…EFDLHARAIL (196 aa)) enclose the ATP-grasp domain. Mg(2+)-binding residues include E277 and E289. Residues D296, K366, and 373–374 (RR) each bind N(1)-(5-phospho-beta-D-ribosyl)glycinamide.

Belongs to the PurK/PurT family. As to quaternary structure, homodimer.

It catalyses the reaction N(1)-(5-phospho-beta-D-ribosyl)glycinamide + formate + ATP = N(2)-formyl-N(1)-(5-phospho-beta-D-ribosyl)glycinamide + ADP + phosphate + H(+). Its pathway is purine metabolism; IMP biosynthesis via de novo pathway; N(2)-formyl-N(1)-(5-phospho-D-ribosyl)glycinamide from N(1)-(5-phospho-D-ribosyl)glycinamide (formate route): step 1/1. Functionally, involved in the de novo purine biosynthesis. Catalyzes the transfer of formate to 5-phospho-ribosyl-glycinamide (GAR), producing 5-phospho-ribosyl-N-formylglycinamide (FGAR). Formate is provided by PurU via hydrolysis of 10-formyl-tetrahydrofolate. The polypeptide is Formate-dependent phosphoribosylglycinamide formyltransferase (Corynebacterium jeikeium (strain K411)).